Reading from the N-terminus, the 84-residue chain is Carboxysome shell vertex protein CsoS4B (84 aa).

The BMV domain occupies 1-77 (MQILQVKKQL…TDLTVGGIID (77 aa)).

Belongs to the CcmL/EutN family. CsoS4 subfamily. Homopentamer.

It is found in the carboxysome. In terms of biological role, probably forms vertices in the carboxysome, a polyhedral inclusion where RuBisCO (ribulose bisphosphate carboxylase, cbbL-cbbS) is sequestered. Has been modeled to induce curvature upon insertion into an otherwise flat hexagonal layer of major carboxysome subunits. This is Carboxysome shell vertex protein CsoS4B from Hydrogenovibrio crunogenus (strain DSM 25203 / XCL-2) (Thiomicrospira crunogena).